The sequence spans 277 residues: 5'-nucleotidase SurE (277 aa).

A divalent metal cation is bound by residues Asp-14, Asp-15, Ser-46, and Asn-104.

The protein belongs to the SurE nucleotidase family. It depends on a divalent metal cation as a cofactor.

It localises to the cytoplasm. The catalysed reaction is a ribonucleoside 5'-phosphate + H2O = a ribonucleoside + phosphate. Functionally, nucleotidase that shows phosphatase activity on nucleoside 5'-monophosphates. This chain is 5'-nucleotidase SurE, found in Picosynechococcus sp. (strain ATCC 27264 / PCC 7002 / PR-6) (Agmenellum quadruplicatum).